A 226-amino-acid polypeptide reads, in one-letter code: tRNA (guanine-N(7)-)-methyltransferase (226 aa).

A disordered region spans residues 1-22 (MTTPQQPHGPLRSFGRLKSRPV). Residues Glu-59, Glu-84, Asp-111, and Asp-133 each contribute to the S-adenosyl-L-methionine site. Asp-133 is a catalytic residue. Lys-137 serves as a coordination point for substrate. The interval 139 to 144 (RHNKRR) is interaction with RNA. Substrate contacts are provided by residues Asp-169 and 206–209 (TRYE).

The protein belongs to the class I-like SAM-binding methyltransferase superfamily. TrmB family.

The catalysed reaction is guanosine(46) in tRNA + S-adenosyl-L-methionine = N(7)-methylguanosine(46) in tRNA + S-adenosyl-L-homocysteine. It participates in tRNA modification; N(7)-methylguanine-tRNA biosynthesis. Its function is as follows. Catalyzes the formation of N(7)-methylguanine at position 46 (m7G46) in tRNA. In Caulobacter vibrioides (strain ATCC 19089 / CIP 103742 / CB 15) (Caulobacter crescentus), this protein is tRNA (guanine-N(7)-)-methyltransferase.